A 259-amino-acid chain; its full sequence is MGQRIDVNHENIYYGDFLAVEDVNINIEPNKVTAFIGPSGCGKSTVLRTLDRMHEIIPGAHVEGEVLLEGKNLYDKDVDPVAVRRDVGMVFQRPNPFPTMSIRENVLAGVRLNNHHLAKSDADDLVEWALRGANLWEEVKDRLDNPGIGLSGGQQQRLCIARAVAVHPQVLLMDEPCSALDPISTLAVEDLINELKSDYTIVIVTHNMQQAARIADYTAFFNLKAVGQPGHLEYFADTITMFNNPQNEEAERYISGRFG.

The ABC transporter domain maps to 2–248 (GQRIDVNHEN…ITMFNNPQNE (247 aa)). 37–44 (GPSGCGKS) contacts ATP.

Belongs to the ABC transporter superfamily. Phosphate importer (TC 3.A.1.7) family. As to quaternary structure, the complex is composed of two ATP-binding proteins (PstB), two transmembrane proteins (PstC and PstA) and a solute-binding protein (PstS).

The protein localises to the cell membrane. The catalysed reaction is phosphate(out) + ATP + H2O = ADP + 2 phosphate(in) + H(+). In terms of biological role, part of the ABC transporter complex PstSACB involved in phosphate import. Responsible for energy coupling to the transport system. The polypeptide is Phosphate import ATP-binding protein PstB (Bifidobacterium longum (strain NCC 2705)).